The primary structure comprises 632 residues: tRNA uridine 5-carboxymethylaminomethyl modification enzyme MnmG (632 aa).

FAD is bound at residue G13–G18. Residue G273–F287 participates in NAD(+) binding.

It belongs to the MnmG family. Homodimer. Heterotetramer of two MnmE and two MnmG subunits. FAD serves as cofactor.

It is found in the cytoplasm. Functionally, NAD-binding protein involved in the addition of a carboxymethylaminomethyl (cmnm) group at the wobble position (U34) of certain tRNAs, forming tRNA-cmnm(5)s(2)U34. This chain is tRNA uridine 5-carboxymethylaminomethyl modification enzyme MnmG, found in Psychrobacter arcticus (strain DSM 17307 / VKM B-2377 / 273-4).